Here is a 504-residue protein sequence, read N- to C-terminus: Maturase K (504 aa).

The protein belongs to the intron maturase 2 family. MatK subfamily.

It is found in the plastid. The protein localises to the chloroplast. Its function is as follows. Usually encoded in the trnK tRNA gene intron. Probably assists in splicing its own and other chloroplast group II introns. The polypeptide is Maturase K (Adenostoma fasciculatum (Chamise)).